A 319-amino-acid polypeptide reads, in one-letter code: Beta-ketoacyl-[acyl-carrier-protein] synthase III (319 aa).

Residues Cys-115 and His-246 contribute to the active site. The ACP-binding stretch occupies residues 247-251; that stretch reads QANLR. Asn-276 is a catalytic residue.

The protein belongs to the thiolase-like superfamily. FabH family. As to quaternary structure, homodimer.

It localises to the cytoplasm. It catalyses the reaction malonyl-[ACP] + acetyl-CoA + H(+) = 3-oxobutanoyl-[ACP] + CO2 + CoA. It participates in lipid metabolism; fatty acid biosynthesis. Catalyzes the condensation reaction of fatty acid synthesis by the addition to an acyl acceptor of two carbons from malonyl-ACP. Catalyzes the first condensation reaction which initiates fatty acid synthesis and may therefore play a role in governing the total rate of fatty acid production. Possesses both acetoacetyl-ACP synthase and acetyl transacylase activities. Its substrate specificity determines the biosynthesis of branched-chain and/or straight-chain of fatty acids. The protein is Beta-ketoacyl-[acyl-carrier-protein] synthase III of Coxiella burnetii (strain CbuK_Q154) (Coxiella burnetii (strain Q154)).